The sequence spans 858 residues: Tetratricopeptide repeat protein 7A (858 aa).

Serine 51 is subject to Phosphoserine. TPR repeat units lie at residues 121 to 157, 177 to 210, 414 to 447, 497 to 531, 533 to 565, and 566 to 599; these read CEAM…MENK, ERLP…AQVF, FHLW…RPSD, YSLQ…APSD, QVIL…RKDD, and AHAL…HPEN. Phosphoserine is present on serine 182. Serine 647, serine 678, serine 679, and serine 690 each carry phosphoserine. Phosphothreonine is present on threonine 693. TPR repeat units follow at residues 745–778, 780–812, and 813–846; these read HSVL…NPDG, RIMH…QSTC, and HEAW…EASS.

As to quaternary structure, component of a phosphatidylinositol 4-kinase (PI4K) complex, composed of PI4KA, EFR3 (EFR3A or EFR3B), TTC7 (TTC7A or TTC7B) and HYCC (HYCC1 or HYCC2). Interacts with PI4KA. Interaction with PI4KA is direct. Interacts with EFR3 (EFR3A or EFR3B), interaction is direct. Interacts with HYCC (HYCC1 or HYCC2), interaction is direct. Association with the PI4K complex is strongly reduced by TMEM150A. As to expression, expressed in epithelial cells of the intestine, thymus, and pancreas (at protein level).

Its subcellular location is the cytoplasm. The protein localises to the cell membrane. Functionally, component of a complex required to localize phosphatidylinositol 4-kinase (PI4K) to the plasma membrane. The complex acts as a regulator of phosphatidylinositol 4-phosphate (PtdIns(4)P) synthesis. In the complex, plays a central role in bridging PI4KA to EFR3B and HYCC1, via direct interactions. The protein is Tetratricopeptide repeat protein 7A of Homo sapiens (Human).